We begin with the raw amino-acid sequence, 623 residues long: Glutathione import ATP-binding protein GsiA (623 aa).

ABC transporter domains are found at residues 18 to 272 (VRNL…QGLL) and 317 to 567 (LQVS…RKLM). ATP contacts are provided by residues 52 to 59 (GESGSGKS) and 360 to 367 (GESGCGKS).

It belongs to the ABC transporter superfamily. Glutathione importer (TC 3.A.1.5.11) family. In terms of assembly, the complex is composed of two ATP-binding proteins (GsiA), two transmembrane proteins (GsiC and GsiD) and a solute-binding protein (GsiB).

The protein resides in the cell inner membrane. The enzyme catalyses glutathione(out) + ATP + H2O = glutathione(in) + ADP + phosphate + H(+). Part of the ABC transporter complex GsiABCD involved in glutathione import. Responsible for energy coupling to the transport system. The polypeptide is Glutathione import ATP-binding protein GsiA (Pectobacterium atrosepticum (strain SCRI 1043 / ATCC BAA-672) (Erwinia carotovora subsp. atroseptica)).